The primary structure comprises 245 residues: Adenosylcobinamide-GDP ribazoletransferase (245 aa).

5 helical membrane-spanning segments follow: residues 31-51 (FGRAVLCYPLVGVLIGVVLYG), 61-81 (PLLQAALLLSLWVALSGALHL), 113-133 (AAVVALVLVLLLKFGALAALL), 138-158 (PGLLLLAPWLARSSLPLLFLT), and 192-212 (LAFGLSGLLALLVTLMLFAWL).

This sequence belongs to the CobS family. The cofactor is Mg(2+).

Its subcellular location is the cell inner membrane. The enzyme catalyses alpha-ribazole + adenosylcob(III)inamide-GDP = adenosylcob(III)alamin + GMP + H(+). It catalyses the reaction alpha-ribazole 5'-phosphate + adenosylcob(III)inamide-GDP = adenosylcob(III)alamin 5'-phosphate + GMP + H(+). It functions in the pathway cofactor biosynthesis; adenosylcobalamin biosynthesis; adenosylcobalamin from cob(II)yrinate a,c-diamide: step 7/7. Functionally, joins adenosylcobinamide-GDP and alpha-ribazole to generate adenosylcobalamin (Ado-cobalamin). Also synthesizes adenosylcobalamin 5'-phosphate from adenosylcobinamide-GDP and alpha-ribazole 5'-phosphate. In Pseudomonas paraeruginosa (strain DSM 24068 / PA7) (Pseudomonas aeruginosa (strain PA7)), this protein is Adenosylcobinamide-GDP ribazoletransferase.